The sequence spans 467 residues: Cytochrome c-552 (467 aa).

Residues 1–27 (MMKKMTGKSFALSALVAASFMAAGAMA) form the signal peptide. H87 contacts heme c. 3 residues coordinate heme: C115, C118, and K119. 6 residues coordinate heme c: C153, C156, H157, C195, C198, and H199. Ca(2+) is bound by residues E201, Y202, K250, and Q252. Y202 is a substrate binding site. Position 253 (H253) interacts with substrate. The heme c site is built by H264, C271, C274, H275, H290, C303, C306, H307, and H382.

The protein belongs to the cytochrome c-552 family. The cofactor is Ca(2+). Heme c serves as cofactor.

It localises to the periplasm. It carries out the reaction 6 Fe(III)-[cytochrome c] + NH4(+) + 2 H2O = 6 Fe(II)-[cytochrome c] + nitrite + 8 H(+). The protein operates within nitrogen metabolism; nitrate reduction (assimilation). In terms of biological role, catalyzes the reduction of nitrite to ammonia, consuming six electrons in the process. The protein is Cytochrome c-552 of Shewanella sp. (strain MR-4).